The chain runs to 408 residues: MRRFERKQNIFRNKDALGESYQPERIEERDEEIEEYMNALQPVIDGWEPNNIFLYGNTGVGKTAVTDYLLDRLQDDVAAYDDIDLSIISLNCKTLNSSYQVAVELVNELRPSGGEISTTGYPQQTVFKKLYQELEAIGGTILIVLDEVDSIGDRDELLYELPRARANGNLDSAKVGVIGISNDFKFRDQLDPRVQDTLCERELQFPPYDATELKNILESRVEVAVTDGSTDTGVLQLCAALAARDSGSARQALDLLRLGGEIAENREAEMIKEGHIEDARSQLEQERVEEGMRELTTHGRLALLAVISKAAKEETPCRTRDLYEEYRSLCESSETDALGQRSLHNHLSDLRMLGILSAHENRSGSRGNYYNYELDVPFTSAIEAMSDVLHLTTEIDTIRDIAAMNNVG.

ATP contacts are provided by residues 60 to 64, tyrosine 208, and arginine 220; that span reads VGKTA.

The protein belongs to the CDC6/cdc18 family.

Its function is as follows. Involved in regulation of DNA replication. This is ORC1-type DNA replication protein 15 (cdc6o) from Haloarcula marismortui (strain ATCC 43049 / DSM 3752 / JCM 8966 / VKM B-1809) (Halobacterium marismortui).